Here is a 197-residue protein sequence, read N- to C-terminus: MYB-like transcription factor EOBII (197 aa).

HTH myb-type domains follow at residues 10–62 (DAEV…LNYL) and 63–117 (RPDV…QKHI). 2 consecutive DNA-binding regions (H-T-H motif) follow at residues 38–62 (WNSLAKSAGLKRTGKSCRLRWLNYL) and 90–113 (WSKIAKHLPGRTDNEIKNYWRTRI). The interval 125 to 158 (GQAASSEQNDHQEACTSQMSNGPNDNTIDQTYSP) is disordered. A compositionally biased stretch (polar residues) spans 138-158 (ACTSQMSNGPNDNTIDQTYSP).

As to expression, specifically expressed in flowers, mostly in stigmas, petal tubes and petal limbs, and, to a lower extent, in anthers and stamen. Also present at low levels in roots, stems, leaves and sepals.

The protein resides in the nucleus. Its function is as follows. MYB-type transcription factor controlling the production of volatile organic compounds (VOCs), including floral volatile benzenoids and phenylpropanoids (FVBP), in flowers of fragrant cultivars (e.g. cv. Mitchell and cv. V26) by regulating the expression of ODO1 and EOBI, key regulators of the shikimate pathway, and of several biosynthetic floral scent-related genes including IGS, PAL2 and CFAT. This scent, mostly produced in the evening and night by the petals, attracts the pollinators (e.g. the night-active hawkmoth pollinator Manduca sexta). Binds to and activates the ODO1 and EOBI promoters via MYB binding sites (MBS) 5'-AAACCTAAT-3' and 5'-CTAACT-3'. Regulates the promoters of IGS1, CFAT and PAL2. Controls flowers petal opening by modulating a global transcriptomic switch. The sequence is that of MYB-like transcription factor EOBII from Petunia hybrida (Petunia).